Here is a 238-residue protein sequence, read N- to C-terminus: LexA repressor (238 aa).

The H-T-H motif DNA-binding region spans 26-46 (FDEMKDALDLRSKSGIHRLIT). Active-site for autocatalytic cleavage activity residues include serine 159 and lysine 197.

It belongs to the peptidase S24 family. In terms of assembly, homodimer.

It catalyses the reaction Hydrolysis of Ala-|-Gly bond in repressor LexA.. Represses a number of genes involved in the response to DNA damage (SOS response), including recA and lexA. In the presence of single-stranded DNA, RecA interacts with LexA causing an autocatalytic cleavage which disrupts the DNA-binding part of LexA, leading to derepression of the SOS regulon and eventually DNA repair. The polypeptide is LexA repressor (Rhodobacter capsulatus (Rhodopseudomonas capsulata)).